The primary structure comprises 56 residues: Aspartyl-phosphate phosphatase YisI (56 aa).

Belongs to the spo0E family.

In terms of biological role, aspartyl-phosphate phosphatase which specifically dephosphorylates the sporulation transcription factor Spo0A-P and negatively regulates the sporulation initiation pathway in order to control the proper timing of sporulation. This Bacillus subtilis (strain 168) protein is Aspartyl-phosphate phosphatase YisI (yisI).